A 284-amino-acid chain; its full sequence is Bifunctional protein FolD (284 aa).

NADP(+)-binding positions include 166–168 and Ile232; that span reads GAS.

Belongs to the tetrahydrofolate dehydrogenase/cyclohydrolase family. As to quaternary structure, homodimer.

It catalyses the reaction (6R)-5,10-methylene-5,6,7,8-tetrahydrofolate + NADP(+) = (6R)-5,10-methenyltetrahydrofolate + NADPH. It carries out the reaction (6R)-5,10-methenyltetrahydrofolate + H2O = (6R)-10-formyltetrahydrofolate + H(+). The protein operates within one-carbon metabolism; tetrahydrofolate interconversion. Its function is as follows. Catalyzes the oxidation of 5,10-methylenetetrahydrofolate to 5,10-methenyltetrahydrofolate and then the hydrolysis of 5,10-methenyltetrahydrofolate to 10-formyltetrahydrofolate. The chain is Bifunctional protein FolD from Shewanella frigidimarina (strain NCIMB 400).